The primary structure comprises 244 residues: Probable ABC transporter ATP-binding protein p29 (244 aa).

An ABC transporter domain is found at 6–241 (LVFDQVSLRY…KLTKQKLMQI (236 aa)). 38-45 (GKSGVGKT) contacts ATP.

It belongs to the ABC transporter superfamily.

In terms of biological role, part of a high-affinity transport system. The sequence is that of Probable ABC transporter ATP-binding protein p29 (p29) from Mycoplasma pneumoniae (strain ATCC 29342 / M129 / Subtype 1) (Mycoplasmoides pneumoniae).